A 79-amino-acid chain; its full sequence is U-actitoxin-Avd9d (79 aa).

The signal sequence occupies residues 1 to 19 (NLKVLAVFVLCAILVVVTA). The propeptide occupies 20–37 (ERRGTETGGYKKDTLEDL). The ShKT domain maps to 44–79 (CFDSFKEATCHMAKTNRLCKTSAKYQINCKKTCGLC). Intrachain disulfides connect C44–C79, C53–C72, and C62–C76. The interval 67-68 (KY) is crucial for binding to potassium channels.

This sequence belongs to the sea anemone type 1 potassium channel toxin family. Type 1b subfamily.

The protein resides in the secreted. Its subcellular location is the nematocyst. Functionally, inhibits voltage-gated potassium channels (Kv1/KCNA). The sequence is that of U-actitoxin-Avd9d from Anemonia viridis (Snakelocks anemone).